A 175-amino-acid polypeptide reads, in one-letter code: Co-chaperone protein daf-41 (175 aa).

Residues 2 to 89 (AKQPTVLWAQ…KTPAWWPRLL (88 aa)) enclose the CS domain. Residues 109–175 (DEDDEAEDAG…EEEGKNGTRA (67 aa)) form a disordered region. Residues 148 to 168 (GLEDDEEDDDMPDLEDNEEEE) show a composition bias toward acidic residues.

The protein belongs to the p23/wos2 family. In terms of tissue distribution, expressed in anterior and posterior neurons including ASE, AWC, ASI and ADL amphids and phasmid sensory neurons, peripheral neurons and ventral cord motorneurons. Additionally expressed in body wall muscle, pharynx, vulva, germ cells and intestine.

Its function is as follows. Co-chaperone for hsp90/daf-21. Involved in regulation of longevity, larval entry and exit from the dauer stage of development and response to environmental cues, such as oxidative stress, in a temperature-dependent manner. Role in daf-16 and hsf-1 inhibition at elevated temperatures. This is Co-chaperone protein daf-41 from Caenorhabditis elegans.